The primary structure comprises 994 residues: Chromatin modification-related protein vid21 (994 aa).

Disordered regions lie at residues Pro-122–Val-275 and Pro-288–Val-308. Basic and acidic residues-rich tracts occupy residues Thr-158–Ile-171, Lys-178–Gly-191, Leu-204–Glu-233, Val-254–Ser-265, and Pro-288–Glu-305. Phosphoserine is present on residues Ser-298 and Ser-378. An HSA domain is found at Pro-475–Glu-548. Positions Ser-671–Asn-693 are disordered. A compositionally biased stretch (basic and acidic residues) spans Phe-672–Asn-693. Residues Lys-713–Asp-773 enclose the Myb-like domain. Disordered stretches follow at residues Thr-857–Leu-880 and Glu-975–Gln-994. Residues Leu-880–Leu-912 are a coiled coil.

Belongs to the EAF1 family. Component of the NuA4 histone acetyltransferase complex.

It is found in the nucleus. In terms of biological role, component of the NuA4 histone acetyltransferase complex which is involved in transcriptional activation of selected genes principally by acetylation of nucleosomal histone H4 and H2A. The NuA4 complex is also involved in DNA repair. The polypeptide is Chromatin modification-related protein vid21 (vid21) (Schizosaccharomyces pombe (strain 972 / ATCC 24843) (Fission yeast)).